We begin with the raw amino-acid sequence, 158 residues long: Small ribosomal subunit protein uS9 (158 aa).

This sequence belongs to the universal ribosomal protein uS9 family.

The polypeptide is Small ribosomal subunit protein uS9 (Brucella abortus (strain S19)).